The sequence spans 682 residues: Potassium-transporting ATPase ATP-binding subunit (682 aa).

4 helical membrane-spanning segments follow: residues 34 to 54 (PVMF…LAMV), 58 to 78 (IAGS…TVLF), 219 to 239 (IALT…TATL), and 254 to 274 (VLVA…LSAI). Catalysis depends on Asp-307, which acts as the 4-aspartylphosphate intermediate. ATP contacts are provided by residues Asp-344, Glu-348, 377–384 (FTAQSRMS), and Lys-395. The Mg(2+) site is built by Asp-518 and Asp-522. 3 helical membrane-spanning segments follow: residues 588–608 (FAII…LNVM), 616–636 (AILS…PLAL), and 662–682 (LVVP…LGLA).

This sequence belongs to the cation transport ATPase (P-type) (TC 3.A.3) family. Type IA subfamily. In terms of assembly, the system is composed of three essential subunits: KdpA, KdpB and KdpC.

The protein localises to the cell inner membrane. The enzyme catalyses K(+)(out) + ATP + H2O = K(+)(in) + ADP + phosphate + H(+). Its function is as follows. Part of the high-affinity ATP-driven potassium transport (or Kdp) system, which catalyzes the hydrolysis of ATP coupled with the electrogenic transport of potassium into the cytoplasm. This subunit is responsible for energy coupling to the transport system and for the release of the potassium ions to the cytoplasm. This Salmonella paratyphi B (strain ATCC BAA-1250 / SPB7) protein is Potassium-transporting ATPase ATP-binding subunit.